Here is a 409-residue protein sequence, read N- to C-terminus: Protein naked cuticle homolog 2 (409 aa).

The N-myristoyl glycine moiety is linked to residue Gly2. One can recognise an EF-hand domain in the interval 109-144; it reads AEDNRQEWVFTLYDFDNSGKVTKEDMSSLMHTIYDV. Ca(2+)-binding residues include Asp122, Asp124, Ser126, Lys128, and Asp133. 4 disordered regions span residues 160 to 224, 243 to 315, 346 to 366, and 388 to 409; these read LRVK…YCVD, TSRF…RYPG, SHTH…RIRS, and RHEH…YHQT. 2 stretches are compositionally biased toward basic and acidic residues: residues 171 to 185 and 193 to 224; these read AARR…RETS and VRSE…YCVD. Over residues 247-268 the composition is skewed to low complexity; sequence DSSSPDADQDPPSRSSHSQSRP. Basic residues predominate over residues 389–409; the sequence is HEHHHHHEHHHHHHYHHYHQT.

The protein belongs to the NKD family. Expressed ubiquitously until 1 dpf, when expression becomes confined to the anterior CNS, with slight expression in the developing tail.

Its subcellular location is the cell membrane. It localises to the cytoplasm. Cell autonomous antagonist of both the canonical and non-canonical Wnt signaling pathways. The chain is Protein naked cuticle homolog 2 (nkd2) from Danio rerio (Zebrafish).